We begin with the raw amino-acid sequence, 229 residues long: Clathrin light chain (229 aa).

2 disordered regions span residues 1-24 and 76-132; these read MSQF…DSKN and EMQA…KLRE. A compositionally biased stretch (basic and acidic residues) spans 107–132; the sequence is EPVRKWKEDQMKRIQERDESSKKLRE. A Phosphoserine modification is found at S229.

This sequence belongs to the clathrin light chain family. Clathrin coats are formed from molecules containing 3 heavy chains and 3 light chains.

The protein resides in the cytoplasmic vesicle membrane. The protein localises to the membrane. Its subcellular location is the coated pit. Its function is as follows. Clathrin is the major protein of the polyhedral coat of coated pits and vesicles. The sequence is that of Clathrin light chain (clc1) from Schizosaccharomyces pombe (strain 972 / ATCC 24843) (Fission yeast).